Consider the following 334-residue polypeptide: Holliday junction branch migration complex subunit RuvB (334 aa).

The interval 1-182 is large ATPase domain (RuvB-L); sequence MDERLVSTEA…FGVHARLEYY (182 aa). ATP contacts are provided by residues leucine 21, arginine 22, glycine 63, lysine 66, threonine 67, threonine 68, 129–131, arginine 172, tyrosine 182, and arginine 219; that span reads EDF. Threonine 67 lines the Mg(2+) pocket. A small ATPAse domain (RuvB-S) region spans residues 183–253; it reads EQRDLAHIVS…IAEDALERLQ (71 aa). Residues 256 to 334 are head domain (RuvB-H); it reads KLGLDHIDHK…HFQMEVPIRD (79 aa). Arginine 311 and arginine 316 together coordinate DNA.

It belongs to the RuvB family. Homohexamer. Forms an RuvA(8)-RuvB(12)-Holliday junction (HJ) complex. HJ DNA is sandwiched between 2 RuvA tetramers; dsDNA enters through RuvA and exits via RuvB. An RuvB hexamer assembles on each DNA strand where it exits the tetramer. Each RuvB hexamer is contacted by two RuvA subunits (via domain III) on 2 adjacent RuvB subunits; this complex drives branch migration. In the full resolvosome a probable DNA-RuvA(4)-RuvB(12)-RuvC(2) complex forms which resolves the HJ.

Its subcellular location is the cytoplasm. It carries out the reaction ATP + H2O = ADP + phosphate + H(+). The RuvA-RuvB-RuvC complex processes Holliday junction (HJ) DNA during genetic recombination and DNA repair, while the RuvA-RuvB complex plays an important role in the rescue of blocked DNA replication forks via replication fork reversal (RFR). RuvA specifically binds to HJ cruciform DNA, conferring on it an open structure. The RuvB hexamer acts as an ATP-dependent pump, pulling dsDNA into and through the RuvAB complex. RuvB forms 2 homohexamers on either side of HJ DNA bound by 1 or 2 RuvA tetramers; 4 subunits per hexamer contact DNA at a time. Coordinated motions by a converter formed by DNA-disengaged RuvB subunits stimulates ATP hydrolysis and nucleotide exchange. Immobilization of the converter enables RuvB to convert the ATP-contained energy into a lever motion, pulling 2 nucleotides of DNA out of the RuvA tetramer per ATP hydrolyzed, thus driving DNA branch migration. The RuvB motors rotate together with the DNA substrate, which together with the progressing nucleotide cycle form the mechanistic basis for DNA recombination by continuous HJ branch migration. Branch migration allows RuvC to scan DNA until it finds its consensus sequence, where it cleaves and resolves cruciform DNA. This Bacillus pumilus (strain SAFR-032) protein is Holliday junction branch migration complex subunit RuvB.